The chain runs to 337 residues: Formamidase (337 aa).

Residues 14–257 (VVIGLVQLQL…DEIITAEVRP (244 aa)) form the CN hydrolase domain. Residue Glu-60 is the Proton acceptor of the active site. Lys-129 serves as the catalytic Proton donor. The active-site Nucleophile is Cys-162.

This sequence belongs to the carbon-nitrogen hydrolase superfamily. Aliphatic amidase family.

The enzyme catalyses formamide + H2O = formate + NH4(+). Functionally, is an aliphatic amidase with a restricted substrate specificity, as it only hydrolyzes formamide. This is Formamidase from Bradyrhizobium diazoefficiens (strain JCM 10833 / BCRC 13528 / IAM 13628 / NBRC 14792 / USDA 110).